Here is a 464-residue protein sequence, read N- to C-terminus: GTPase Der (464 aa).

2 EngA-type G domains span residues 3–166 (PTIA…AVES) and 177–350 (LKMA…QAAT). Residues 9-16 (GRPNVGKS), 56-60 (DTGGI), 118-121 (NKVD), 183-190 (GRPNVGKS), 230-234 (DTAGV), and 295-298 (NKWD) each bind GTP. Positions 351-435 (EKYSTSFLTR…PVRIEYRSGD (85 aa)) constitute a KH-like domain.

It belongs to the TRAFAC class TrmE-Era-EngA-EngB-Septin-like GTPase superfamily. EngA (Der) GTPase family. In terms of assembly, associates with the 50S ribosomal subunit.

Its function is as follows. GTPase that plays an essential role in the late steps of ribosome biogenesis. The sequence is that of GTPase Der from Teredinibacter turnerae (strain ATCC 39867 / T7901).